The primary structure comprises 249 residues: 5-oxoprolinase subunit A (249 aa).

The protein belongs to the LamB/PxpA family. Forms a complex composed of PxpA, PxpB and PxpC.

It catalyses the reaction 5-oxo-L-proline + ATP + 2 H2O = L-glutamate + ADP + phosphate + H(+). Functionally, catalyzes the cleavage of 5-oxoproline to form L-glutamate coupled to the hydrolysis of ATP to ADP and inorganic phosphate. This Limosilactobacillus fermentum (strain NBRC 3956 / LMG 18251) (Lactobacillus fermentum) protein is 5-oxoprolinase subunit A.